The chain runs to 314 residues: Putative peptide transport system permease protein BRA1092/BS1330_II1084 (314 aa).

A run of 6 helical transmembrane segments spans residues 12–32, 101–121, 135–155, 177–197, 237–257, and 286–306; these read AIPV…LLPG, LALL…VVAA, LALL…VILF, WLRS…GYLA, VSVL…SVVI, and MLFL…LYTI. The region spanning 95–304 is the ABC transmembrane type-1 domain; sequence LPVTISLALL…AINVLVDILY (210 aa).

This sequence belongs to the binding-protein-dependent transport system permease family. In terms of assembly, the complex is composed of two ATP-binding proteins (BRA1094), two transmembrane proteins (BRA1092 and BRA1093) and a solute-binding protein (BRA1090).

The protein resides in the cell inner membrane. In terms of biological role, probably part of an ABC transporter complex that could be involved in peptide import. Probably responsible for the translocation of the substrate across the membrane. The sequence is that of Putative peptide transport system permease protein BRA1092/BS1330_II1084 from Brucella suis biovar 1 (strain 1330).